Here is a 396-residue protein sequence, read N- to C-terminus: Elongation factor Tu (396 aa).

One can recognise a tr-type G domain in the interval 10–206; that stretch reads KPHVNVGTIG…ALDSYIPEPV (197 aa). Residues 19–26 are G1; that stretch reads GHIDHGKT. Residue 19–26 coordinates GTP; the sequence is GHIDHGKT. Thr-26 lines the Mg(2+) pocket. The G2 stretch occupies residues 60-64; sequence TKTVT. The segment at 83 to 86 is G3; it reads DCPG. GTP contacts are provided by residues 83–87 and 138–141; these read DCPGH and NKCD. The G4 stretch occupies residues 138-141; that stretch reads NKCD. The segment at 176 to 178 is G5; that stretch reads ASL.

It belongs to the TRAFAC class translation factor GTPase superfamily. Classic translation factor GTPase family. EF-Tu/EF-1A subfamily. As to quaternary structure, monomer.

The protein localises to the cytoplasm. It catalyses the reaction GTP + H2O = GDP + phosphate + H(+). Its function is as follows. GTP hydrolase that promotes the GTP-dependent binding of aminoacyl-tRNA to the A-site of ribosomes during protein biosynthesis. This Sorangium cellulosum (strain So ce56) (Polyangium cellulosum (strain So ce56)) protein is Elongation factor Tu.